The sequence spans 944 residues: UvrABC system protein A (944 aa).

One can recognise an ABC transporter 1 domain in the interval 1 to 242 (MSKVDFLHIK…GKGIVKVENV (242 aa)). Residue 34-41 (GLSGSGKS) participates in ATP binding. The segment at 256–283 (CPKGDFEMPKIETRLFSFNSPYGMCQNC) adopts a C4-type; degenerate zinc-finger fold. ABC transporter domains lie at 359–597 (EEID…KYLS) and 610–935 (SGSG…EKSY). Residue 643 to 650 (GVSGSGKS) coordinates ATP. Residues 744–770 (CEKCSGDGSIKIEMFFLPNVYITCDHC) form a C4-type zinc finger.

Belongs to the ABC transporter superfamily. UvrA family. In terms of assembly, forms a heterotetramer with UvrB during the search for lesions.

It localises to the cytoplasm. Functionally, the UvrABC repair system catalyzes the recognition and processing of DNA lesions. UvrA is an ATPase and a DNA-binding protein. A damage recognition complex composed of 2 UvrA and 2 UvrB subunits scans DNA for abnormalities. When the presence of a lesion has been verified by UvrB, the UvrA molecules dissociate. The sequence is that of UvrABC system protein A from Mycoplasmopsis pulmonis (strain UAB CTIP) (Mycoplasma pulmonis).